Consider the following 394-residue polypeptide: Mannosyl-3-phosphoglycerate synthase (394 aa).

It belongs to the glycosyltransferase 2 family.

Its subcellular location is the cytoplasm. The catalysed reaction is (2R)-3-phosphoglycerate + GDP-alpha-D-mannose = 2-O-(alpha-D-mannosyl)-3-phosphoglycerate + GDP + H(+). The protein operates within carbohydrate biosynthesis; 2-(alpha-D-mannosyl)-D-glycerate biosynthesis; 2-(alpha-D-mannosyl)-D-glycerate from GDP-alpha-D-mannose (MPG route): step 1/2. Its function is as follows. Transfers a mannosyl group from GDP-mannose to phosphoglycerate to form mannosyl-3-phosphoglycerate (MPG). This Pyrococcus furiosus (strain ATCC 43587 / DSM 3638 / JCM 8422 / Vc1) protein is Mannosyl-3-phosphoglycerate synthase (mngA).